The chain runs to 503 residues: Glutamate--tRNA ligase (503 aa).

A 'HIGH' region motif is present at residues 15–25 (PSPTGYLHVGG). Positions 262 to 266 (KLSKR) match the 'KMSKS' region motif. An ATP-binding site is contributed by Lys265.

Belongs to the class-I aminoacyl-tRNA synthetase family. Glutamate--tRNA ligase type 1 subfamily. In terms of assembly, monomer.

The protein resides in the cytoplasm. The catalysed reaction is tRNA(Glu) + L-glutamate + ATP = L-glutamyl-tRNA(Glu) + AMP + diphosphate. Functionally, catalyzes the attachment of glutamate to tRNA(Glu) in a two-step reaction: glutamate is first activated by ATP to form Glu-AMP and then transferred to the acceptor end of tRNA(Glu). This Prosthecochloris aestuarii (strain DSM 271 / SK 413) protein is Glutamate--tRNA ligase.